Here is a 445-residue protein sequence, read N- to C-terminus: Ribosomal protein uS12 methylthiotransferase RimO (445 aa).

The region spanning 10 to 120 (PKVGFVSLGC…VVNAVHEVVP (111 aa)) is the MTTase N-terminal domain. The [4Fe-4S] cluster site is built by Cys-19, Cys-55, Cys-84, Cys-153, Cys-157, and Cys-160. A Radical SAM core domain is found at 139 to 378 (LTPRHYAYLK…AHQQEISSAR (240 aa)). Residues 380–445 (QQRIGKEIEV…DEYDLWAETL (66 aa)) form the TRAM domain.

It belongs to the methylthiotransferase family. RimO subfamily. The cofactor is [4Fe-4S] cluster.

The protein resides in the cytoplasm. It carries out the reaction L-aspartate(89)-[ribosomal protein uS12]-hydrogen + (sulfur carrier)-SH + AH2 + 2 S-adenosyl-L-methionine = 3-methylsulfanyl-L-aspartate(89)-[ribosomal protein uS12]-hydrogen + (sulfur carrier)-H + 5'-deoxyadenosine + L-methionine + A + S-adenosyl-L-homocysteine + 2 H(+). In terms of biological role, catalyzes the methylthiolation of an aspartic acid residue of ribosomal protein uS12. This is Ribosomal protein uS12 methylthiotransferase RimO from Pseudomonas fluorescens (strain ATCC BAA-477 / NRRL B-23932 / Pf-5).